Consider the following 344-residue polypeptide: Phenylalanine--tRNA ligase alpha subunit (344 aa).

Glu256 lines the Mg(2+) pocket.

It belongs to the class-II aminoacyl-tRNA synthetase family. Phe-tRNA synthetase alpha subunit type 1 subfamily. Tetramer of two alpha and two beta subunits. Mg(2+) serves as cofactor.

The protein resides in the cytoplasm. It carries out the reaction tRNA(Phe) + L-phenylalanine + ATP = L-phenylalanyl-tRNA(Phe) + AMP + diphosphate + H(+). This is Phenylalanine--tRNA ligase alpha subunit from Bacillus anthracis (strain CDC 684 / NRRL 3495).